The sequence spans 312 residues: Glycerol 2-dehydrogenase (NADP(+)) (312 aa).

Residue Tyr56 is the Proton donor of the active site. His112 is a substrate binding site. 220 to 274 is an NADP(+) binding site; the sequence is SPLGSTDAPLLKEPVILEIAKKNNVQPGHVVISWHVQRGYVVLPKSVNPDRIKTN. A Phosphoserine modification is found at Ser306.

Belongs to the aldo/keto reductase family.

The protein localises to the cytoplasm. The enzyme catalyses glycerol + NADP(+) = dihydroxyacetone + NADPH + H(+). Its function is as follows. Glycerol dehydrogenase involved in glycerol catabolism under microaerobic conditions. Has mRNA binding activity. In Saccharomyces cerevisiae (strain ATCC 204508 / S288c) (Baker's yeast), this protein is Glycerol 2-dehydrogenase (NADP(+)) (GCY1).